Here is a 485-residue protein sequence, read N- to C-terminus: uncharacterized protein (485 aa).

The next 3 helical transmembrane spans lie at 284 to 304 (LLALNGLFTLMISHNLDYPLF), 328 to 348 (LLDLFLSSTHLPATLIASFIK), and 353 to 373 (LALTAPPGAIAIVIPFIYNCL).

It belongs to the CBF/MAK21 family.

The protein resides in the membrane. This is an uncharacterized protein from Schizosaccharomyces pombe (strain 972 / ATCC 24843) (Fission yeast).